Consider the following 758-residue polypeptide: Probable adenosylcobalamin-dependent ribonucleoside-triphosphate reductase (758 aa).

C194 and C459 are oxidised to a cystine. The interval 233–256 is disordered; it reads IIIKGQLPPPPPQQQPQQQQQQHG. Residues C448 and E450 contribute to the active site.

The protein belongs to the class II ribonucleoside-triphosphate reductase family. As to quaternary structure, monomer. Requires adenosylcob(III)alamin as cofactor.

The catalysed reaction is a 2'-deoxyribonucleoside 5'-triphosphate + [thioredoxin]-disulfide + H2O = a ribonucleoside 5'-triphosphate + [thioredoxin]-dithiol. This is Probable adenosylcobalamin-dependent ribonucleoside-triphosphate reductase (rtpR) from Dictyostelium discoideum (Social amoeba).